A 38-amino-acid polypeptide reads, in one-letter code: Alpha-conotoxin PeIA (38 aa).

Positions 1-21 (FDGRNAAANDKASDLVALTVR) are excised as a propeptide. 2 disulfides stabilise this stretch: Cys-23–Cys-29 and Cys-24–Cys-37. Residues 25 to 27 (SHP) are ser-Xaa-Pro motif, crucial for potent interaction with nAChR. Residue Cys-37 is modified to Cysteine amide.

Belongs to the conotoxin A superfamily. In terms of processing, the hydroxylation at position Pro-27 is critical, since an hydroxylation at this position decreases potency of the toxin to inhibit both alpha-3-beta-2 (1300-fold) and alpha-6/alpha-3-beta-2-beta-3 (130-fold) nAChRs. A non-modified residue at position Pro-34 is critical, since a hydroxylation at this position decreases potency of the toxin to inhibit alpha-3-beta-2 (1-45-fold) and increases potency to inhibit alpha-6/alpha-3-beta-2-beta-3 (1.77-fold) nAChRs. In terms of tissue distribution, expressed by the venom duct.

The protein resides in the secreted. In terms of biological role, alpha-conotoxins act on postsynaptic membranes, they bind to the nicotinic acetylcholine receptors (nAChR) and thus inhibit them. This synthetic peptide potently and reversibly blocks alpha-9-alpha-10/CHRNA9-CHRNA10 nAChR (IC(50)=6.9-54.9 nM), alpha-3-beta-2/CHRNA3-CHRNB2 (IC(50)=9.7-97.5 nM) and alpha-6/alpha-3-beta-2-beta-3 (CHRNA6/CHRNA3-CHRNB2-CHRNB3) (IC(50)=11.1-17.2 nM). It also inhibits alpha-6/alpha-3-beta-4 (CHRNA6/CHRNA3-CHRNB4) nAChR with a higher potency on human (IC(50)=6.75 nM) than on rat receptors (IC(50)=130-147 nM). Also shows a weak ability to inhibit alpha-3-beta-4/CHRNA3-CHRNB4 (IC(50)=480-1500 nM). This synthetic toxin also inhibits N-type calcium channels (Ca2.2/CACNA1B) (IC(50)=1.1 nM) via the activation of the G protein-coupled GABA(B) receptor in DRG neurons. Also exhibits inhibition of D.melanogaster alpha-7/CHRNA7 nAChRs. In Conus pergrandis (Grand cone), this protein is Alpha-conotoxin PeIA.